We begin with the raw amino-acid sequence, 241 residues long: Small ribosomal subunit protein uS2 (241 aa).

The protein belongs to the universal ribosomal protein uS2 family.

This Klebsiella pneumoniae subsp. pneumoniae (strain ATCC 700721 / MGH 78578) protein is Small ribosomal subunit protein uS2.